Here is a 119-residue protein sequence, read N- to C-terminus: Small ribosomal subunit protein bS6 (119 aa).

Residues 95–119 (AVTEPSPLAKGNEKREDRKESEDAE) are disordered. Positions 105-119 (GNEKREDRKESEDAE) are enriched in basic and acidic residues.

This sequence belongs to the bacterial ribosomal protein bS6 family.

Functionally, binds together with bS18 to 16S ribosomal RNA. The protein is Small ribosomal subunit protein bS6 of Halorhodospira halophila (strain DSM 244 / SL1) (Ectothiorhodospira halophila (strain DSM 244 / SL1)).